Reading from the N-terminus, the 508-residue chain is Glycerol kinase (508 aa).

Thr14 serves as a coordination point for ADP. Positions 14, 15, and 16 each coordinate ATP. Thr14 is a sn-glycerol 3-phosphate binding site. Arg18 provides a ligand contact to ADP. 3 residues coordinate sn-glycerol 3-phosphate: Arg84, Glu85, and Tyr136. 3 residues coordinate glycerol: Arg84, Glu85, and Tyr136. Phosphohistidine; by HPr is present on His232. Asp246 serves as a coordination point for sn-glycerol 3-phosphate. Residues Asp246 and Gln247 each coordinate glycerol. Residues Thr268 and Gly311 each coordinate ADP. 4 residues coordinate ATP: Thr268, Gly311, Gln315, and Gly412. Positions 412 and 416 each coordinate ADP.

The protein belongs to the FGGY kinase family. In terms of assembly, homotetramer and homodimer (in equilibrium). The phosphoenolpyruvate-dependent sugar phosphotransferase system (PTS), including enzyme I, and histidine-containing protein (HPr) are required for the phosphorylation, which leads to the activation of the enzyme.

It catalyses the reaction glycerol + ATP = sn-glycerol 3-phosphate + ADP + H(+). Its pathway is polyol metabolism; glycerol degradation via glycerol kinase pathway; sn-glycerol 3-phosphate from glycerol: step 1/1. Its activity is regulated as follows. Activated by phosphorylation and inhibited by fructose 1,6-bisphosphate (FBP). Functionally, key enzyme in the regulation of glycerol uptake and metabolism. Catalyzes the phosphorylation of glycerol to yield sn-glycerol 3-phosphate. In Streptococcus pyogenes serotype M28 (strain MGAS6180), this protein is Glycerol kinase.